Consider the following 529-residue polypeptide: Listeriolysin O (529 aa).

Residues Met-1–Ala-24 form the signal peptide. A disordered region spans residues Ser-35–Glu-54. The next 4 beta stranded transmembrane spans lie at Glu-214–Ala-227, Val-234–Lys-243, Ser-312–Ala-321, and Ser-329–Ser-341. A Conserved undecapeptide motif is present at residues Glu-483–Arg-493. The Cholesterol binding motif lies at Thr-515 to Leu-516.

The protein belongs to the cholesterol-dependent cytolysin family. As to quaternary structure, homooligomeric pore complex of 35 to 50 subunits; when inserted in the host membrane.

It localises to the secreted. The protein resides in the host membrane. It is found in the host cell membrane. With respect to regulation, activity of listeriolysin O is regulated on multiple levels. It should be high in the phagosome, thereby allowing escape of the bacteria from the phagosomal compartment. Then, once inside the host cytosol, the activity must be controlled to prevent lysis of the host plasma membrane and loss of the intracellular environment. In terms of biological role, a cholesterol-dependent toxin that causes cytolysis by forming pores in cholesterol containing host membranes. After binding to target membranes, the protein undergoes a major conformation change, leading to its insertion in the host membrane and formation of an oligomeric pore complex. Cholesterol is required for binding to host membranes, membrane insertion and pore formation; cholesterol binding is mediated by a Thr-Leu pair in the C-terminus. Acts as a major virulence factor required for the escape of bacteria from phagosomal vacuoles and entry into the host cytosol. Can be reversibly inactivated by oxidation. In Listeria monocytogenes serotype 4a (strain HCC23), this protein is Listeriolysin O (hly).